The chain runs to 156 residues: MQQSQRGCGQNSYGQSGYRQRGFTLLEIMVVIVILGVLASLVVPNLMGNKEKADRQKAVSDIVSLESALDMYKLDNNRYPSTEQGLKALVTKPTVQPEPRNYPADGYIRRLPQDPWGTDYQLLNPGQHGKLDIFSLGPDGMPGTEDDIGNWNLDKK.

Residues 1-22 (MQQSQRGCGQNSYGQSGYRQRG) constitute a propeptide, leader sequence. N-methylphenylalanine is present on Phe23. A helical membrane pass occupies residues 23-43 (FTLLEIMVVIVILGVLASLVV).

Belongs to the GSP G family. Type II secretion system is composed of four main components: the outer membrane complex, the inner membrane complex, the cytoplasmic secretion ATPase and the periplasm-spanning pseudopilus. Forms homomultimers. Post-translationally, cleaved by the prepilin peptidase. Methylated by prepilin peptidase at the amino group of the N-terminal phenylalanine once the leader sequence is cleaved.

The protein localises to the cell inner membrane. In terms of biological role, core component of the type II secretion system required for the energy-dependent secretion of extracellular factors such as proteases and toxins from the periplasm. Pseudopilin (pilin-like) protein that polymerizes to form the pseudopilus. Further polymerization triggers pseudopilus growth. The sequence is that of Type II secretion system core protein G (outG) from Pectobacterium carotovorum subsp. carotovorum (Erwinia carotovora subsp. carotovora).